Consider the following 505-residue polypeptide: Lysine--tRNA ligase (505 aa).

Positions 415 and 422 each coordinate Mg(2+).

It belongs to the class-II aminoacyl-tRNA synthetase family. As to quaternary structure, homodimer. Mg(2+) serves as cofactor.

It is found in the cytoplasm. It carries out the reaction tRNA(Lys) + L-lysine + ATP = L-lysyl-tRNA(Lys) + AMP + diphosphate. This chain is Lysine--tRNA ligase, found in Xanthomonas axonopodis pv. citri (strain 306).